The sequence spans 265 residues: Phosphonates import ATP-binding protein PhnC 1 (265 aa).

Residues 3 to 247 (LRLSAIELRH…HLDTLYANEQ (245 aa)) enclose the ABC transporter domain. Residue 36 to 43 (GPSGAGKT) participates in ATP binding.

This sequence belongs to the ABC transporter superfamily. Phosphonates importer (TC 3.A.1.9.1) family. As to quaternary structure, the complex is composed of two ATP-binding proteins (PhnC), two transmembrane proteins (PhnE) and a solute-binding protein (PhnD).

The protein resides in the cell inner membrane. The enzyme catalyses phosphonate(out) + ATP + H2O = phosphonate(in) + ADP + phosphate + H(+). Its function is as follows. Part of the ABC transporter complex PhnCDE involved in phosphonates import. Responsible for energy coupling to the transport system. The sequence is that of Phosphonates import ATP-binding protein PhnC 1 from Pseudomonas syringae pv. syringae (strain B728a).